Here is a 116-residue protein sequence, read N- to C-terminus: Hydrogenase maturation factor HypA (116 aa).

Histidine 2 lines the Ni(2+) pocket. The Zn(2+) site is built by cysteine 73, cysteine 76, cysteine 89, and cysteine 92.

Belongs to the HypA/HybF family.

Its function is as follows. Involved in the maturation of [NiFe] hydrogenases. Required for nickel insertion into the metal center of the hydrogenase. The sequence is that of Hydrogenase maturation factor HypA from Chlorobium limicola (strain DSM 245 / NBRC 103803 / 6330).